A 446-amino-acid chain; its full sequence is MKLFGTDGVRGKAGEKLSAQTSMRLAMAAGIYFRKTSATNVILVGKDTRKSGYMIETAIVAGLTAVGYNVLQIGPMPTPAIAFLTENMRCDAGIMISASHNPYYDNGIKFFDSFGNKLDETIEAEIEKIFYDDELIANAQKTMTEIGANKRIDDVIGRYIVQIKNSFPKELNLKNLRVVLDVANGAAYKVAPTVFSELGADVIVINNEPNGSNINQNCGALHPEDLASEVKRLRADIGFAFDGDADRLVVVDENGEVVHGDAILGSLAAFLHEQKALKGGAIVATVMSNAALDDYLKAHKIKLLRSNVGDKYVLEMMKENGINFGGEQSGHVIFNDYAKTGDGLVTSMQVVAMMLKKGKKASEIFGELKPYPQILLNLKITEKKPLDKIEGLKELEASLAKEGIRSLFRYSGTENLIRLLLEGKNQTLVEKRMDEVEKFFVKALNA.

The Phosphoserine intermediate role is filled by Ser99. Residues Ser99, Asp242, Asp244, and Asp246 each coordinate Mg(2+). A Phosphoserine modification is found at Ser99.

Belongs to the phosphohexose mutase family. Mg(2+) serves as cofactor. Activated by phosphorylation.

The enzyme catalyses alpha-D-glucosamine 1-phosphate = D-glucosamine 6-phosphate. In terms of biological role, catalyzes the conversion of glucosamine-6-phosphate to glucosamine-1-phosphate. In Campylobacter concisus (strain 13826), this protein is Phosphoglucosamine mutase.